The following is a 115-amino-acid chain: Ribonuclease P protein component (115 aa).

It belongs to the RnpA family. As to quaternary structure, consists of a catalytic RNA component (M1 or rnpB) and a protein subunit.

The enzyme catalyses Endonucleolytic cleavage of RNA, removing 5'-extranucleotides from tRNA precursor.. In terms of biological role, RNaseP catalyzes the removal of the 5'-leader sequence from pre-tRNA to produce the mature 5'-terminus. It can also cleave other RNA substrates such as 4.5S RNA. The protein component plays an auxiliary but essential role in vivo by binding to the 5'-leader sequence and broadening the substrate specificity of the ribozyme. The chain is Ribonuclease P protein component from Bacillus cereus (strain ATCC 10987 / NRS 248).